We begin with the raw amino-acid sequence, 754 residues long: Ribosomal RNA large subunit methyltransferase K/L (754 aa).

In terms of domain architecture, THUMP spans 46-157; that stretch reads TAYRLCLWSR…RGEAILSLDL (112 aa).

Belongs to the methyltransferase superfamily. RlmKL family.

Its subcellular location is the cytoplasm. The enzyme catalyses guanosine(2445) in 23S rRNA + S-adenosyl-L-methionine = N(2)-methylguanosine(2445) in 23S rRNA + S-adenosyl-L-homocysteine + H(+). It catalyses the reaction guanosine(2069) in 23S rRNA + S-adenosyl-L-methionine = N(2)-methylguanosine(2069) in 23S rRNA + S-adenosyl-L-homocysteine + H(+). Its function is as follows. Specifically methylates the guanine in position 2445 (m2G2445) and the guanine in position 2069 (m7G2069) of 23S rRNA. The chain is Ribosomal RNA large subunit methyltransferase K/L from Pseudomonas fluorescens (strain ATCC BAA-477 / NRRL B-23932 / Pf-5).